The primary structure comprises 86 residues: Antimicrobial peptide 2 (86 aa).

The first 25 residues, 1 to 25 (MVNMKCVALIVIVMMAFMMVDPSMG), serve as a signal peptide directing secretion. 3 disulfides stabilise this stretch: Cys29/Cys40, Cys34/Cys46, and Cys39/Cys53. The Chitin-binding type-1 domain maps to 29–53 (CVRGRCPSGMCCSQFGYCGKGPKYC). Residues 56–86 (ASTTVDHQADVAATKTAKNPTDAKLAGAGSP) constitute a propeptide, removed in mature form.

As to quaternary structure, homodimer.

Chitin-binding protein with a defensive function against numerous chitin containing fungal pathogens. It is also a potent inhibitor of Gram-positive bacteria. This Amaranthus caudatus (Love-lies-bleeding) protein is Antimicrobial peptide 2.